Reading from the N-terminus, the 125-residue chain is Small ribosomal subunit protein uS13 (125 aa).

The tract at residues 90-125 (TRHRRGLPVRGQRTHTNARTKKGPRRAIAGKKKVTK) is disordered.

The protein belongs to the universal ribosomal protein uS13 family. Part of the 30S ribosomal subunit. Forms a loose heterodimer with protein S19. Forms two bridges to the 50S subunit in the 70S ribosome.

Functionally, located at the top of the head of the 30S subunit, it contacts several helices of the 16S rRNA. In the 70S ribosome it contacts the 23S rRNA (bridge B1a) and protein L5 of the 50S subunit (bridge B1b), connecting the 2 subunits; these bridges are implicated in subunit movement. Contacts the tRNAs in the A and P-sites. This Gemmatimonas aurantiaca (strain DSM 14586 / JCM 11422 / NBRC 100505 / T-27) protein is Small ribosomal subunit protein uS13.